We begin with the raw amino-acid sequence, 664 residues long: Phosphomethylpyrimidine synthase (664 aa).

Residues asparagine 235, methionine 264, tyrosine 293, histidine 329, 349 to 351 (SRG), 390 to 393 (DGMR), and glutamate 429 each bind substrate. Histidine 433 lines the Zn(2+) pocket. Substrate is bound at residue tyrosine 456. Histidine 497 is a Zn(2+) binding site. Cysteine 577, cysteine 580, and cysteine 585 together coordinate [4Fe-4S] cluster.

It belongs to the ThiC family. As to quaternary structure, homodimer. It depends on [4Fe-4S] cluster as a cofactor.

The enzyme catalyses 5-amino-1-(5-phospho-beta-D-ribosyl)imidazole + S-adenosyl-L-methionine = 4-amino-2-methyl-5-(phosphooxymethyl)pyrimidine + CO + 5'-deoxyadenosine + formate + L-methionine + 3 H(+). Its pathway is cofactor biosynthesis; thiamine diphosphate biosynthesis. Functionally, catalyzes the synthesis of the hydroxymethylpyrimidine phosphate (HMP-P) moiety of thiamine from aminoimidazole ribotide (AIR) in a radical S-adenosyl-L-methionine (SAM)-dependent reaction. The protein is Phosphomethylpyrimidine synthase of Shewanella amazonensis (strain ATCC BAA-1098 / SB2B).